Consider the following 170-residue polypeptide: Translationally-controlled tumor protein homolog (170 aa).

Residues 1–170 enclose the TCTP domain; the sequence is MLIYNDILNG…WKHGLKETKV (170 aa).

The protein belongs to the TCTP family.

It localises to the cytoplasm. The protein resides in the cytoskeleton. Its function is as follows. Involved in protein synthesis. Involved in microtubule stabilization. This Gibberella zeae (strain ATCC MYA-4620 / CBS 123657 / FGSC 9075 / NRRL 31084 / PH-1) (Wheat head blight fungus) protein is Translationally-controlled tumor protein homolog.